The following is a 42-amino-acid chain: MKKCFIIKQSHIIFFLCTFLNDNNWQKIHTQREKTQIKKKQC.

This is an uncharacterized protein from Dictyostelium discoideum (Social amoeba).